The primary structure comprises 245 residues: Orotidine 5'-phosphate decarboxylase (245 aa).

Residues aspartate 22, lysine 44, 71–80 (DLKFHDIPNT), threonine 131, arginine 192, glutamine 201, glycine 221, and arginine 222 contribute to the substrate site. The active-site Proton donor is the lysine 73.

This sequence belongs to the OMP decarboxylase family. Type 1 subfamily. As to quaternary structure, homodimer.

The enzyme catalyses orotidine 5'-phosphate + H(+) = UMP + CO2. It functions in the pathway pyrimidine metabolism; UMP biosynthesis via de novo pathway; UMP from orotate: step 2/2. Catalyzes the decarboxylation of orotidine 5'-monophosphate (OMP) to uridine 5'-monophosphate (UMP). The sequence is that of Orotidine 5'-phosphate decarboxylase from Salmonella gallinarum (strain 287/91 / NCTC 13346).